We begin with the raw amino-acid sequence, 88 residues long: Toxin RelE3 (88 aa).

This sequence belongs to the RelE toxin family. In terms of assembly, forms heterodimers with RelB3 and possibly a heterotetramer RelE3-RelB3(2)-RelE3 from 2 heterodimers. The heterotetramer is probably not very stable in solution.

In terms of biological role, toxic component of a type II toxin-antitoxin (TA) system. Has RNase activity. Is very toxic upon expression in E.coli. Its toxic activity is probably neutralized by the cognate antitoxin RelB3. The chain is Toxin RelE3 (relE3) from Methanocaldococcus jannaschii (strain ATCC 43067 / DSM 2661 / JAL-1 / JCM 10045 / NBRC 100440) (Methanococcus jannaschii).